A 106-amino-acid polypeptide reads, in one-letter code: Photosystem II 5 kDa protein, chloroplastic (106 aa).

Residues 1–76 (MASITMMSSF…ACSVAKTAMA (76 aa)) constitute a chloroplast transit peptide. Cys95 and Cys104 are disulfide-bonded.

Post-translationally, disulfide bond. Expressed in midvein, lamina and periphery of leaves (at protein level).

The protein resides in the plastid. It localises to the chloroplast thylakoid membrane. Its function is as follows. May be a component of the oxygen-evolving complex. The protein is Photosystem II 5 kDa protein, chloroplastic of Petunia hybrida (Petunia).